The chain runs to 492 residues: Probable Xaa-Pro aminopeptidase ACLA_020440 (492 aa).

Aspartate 272, aspartate 283, glutamate 421, and glutamate 460 together coordinate Mn(2+).

Belongs to the peptidase M24B family. Mn(2+) is required as a cofactor.

The enzyme catalyses Release of any N-terminal amino acid, including proline, that is linked to proline, even from a dipeptide or tripeptide.. Functionally, catalyzes the removal of a penultimate prolyl residue from the N-termini of peptides. In Aspergillus clavatus (strain ATCC 1007 / CBS 513.65 / DSM 816 / NCTC 3887 / NRRL 1 / QM 1276 / 107), this protein is Probable Xaa-Pro aminopeptidase ACLA_020440.